A 357-amino-acid polypeptide reads, in one-letter code: MSSIEELARANVRALTPYQSARRLGGNGDVWLNANEYPQAPEFQLTLQTLNRYPECQPVMVINRYAEYAGVTPEQVLVSRGADEGIELLIRAFCEPGKDAILFCPPTYGMYAVSAETFGVERRTAASKSDWQLDLDAIESQLDGTKVVYVCSPNNPTGNLIARDDLRQLLTLAQGKALVVIDEAYIEFCPQASTASWLAEFPHLVILRTLSKAFSLAGLRCGFTLANPEVIQLLLKVIAPYPLSTPVADIAAQALSHEGIAKMKANVAEVTTNRRWLSDILKNIPCIEEVFHSESNYLLVRFTASPSVFKTLWDQGIILRDQNKQPSLAGCLRITIGNRYECERVVAALQSLPGINA.

N6-(pyridoxal phosphate)lysine is present on Lys-212.

Belongs to the class-II pyridoxal-phosphate-dependent aminotransferase family. Histidinol-phosphate aminotransferase subfamily. Homodimer. Requires pyridoxal 5'-phosphate as cofactor.

It carries out the reaction L-histidinol phosphate + 2-oxoglutarate = 3-(imidazol-4-yl)-2-oxopropyl phosphate + L-glutamate. It functions in the pathway amino-acid biosynthesis; L-histidine biosynthesis; L-histidine from 5-phospho-alpha-D-ribose 1-diphosphate: step 7/9. The protein is Histidinol-phosphate aminotransferase of Pectobacterium atrosepticum (strain SCRI 1043 / ATCC BAA-672) (Erwinia carotovora subsp. atroseptica).